The primary structure comprises 170 residues: MVNKVKRRVSCFPKATYYKPREIPLCCLEIANISIEELEAIRLCDLLQIEQNEAADRMGISRKTFWSDLQRARQKVADALVNGKAIEISGGEYINTGECRVNFLCKECDHMWEPKFDQNRPTNCPSCGSSLIFRLGGDGRGKRFVENDYCCPKEKGSSRNTSEGSKKKLQ.

Belongs to the UPF0251 family.

This is UPF0251 protein MA_1017 from Methanosarcina acetivorans (strain ATCC 35395 / DSM 2834 / JCM 12185 / C2A).